We begin with the raw amino-acid sequence, 77 residues long: MIEASVFMTNRSQAVRLPAEVRFSEEIKKLSVRVSGSDRILSPLNQSWDSFFLNDQAVSDDFMNEREIAFQPEREAL.

The region spanning 4 to 46 (ASVFMTNRSQAVRLPAEVRFSEEIKKLSVRVSGSDRILSPLNQ) is the SpoVT-AbrB domain.

Belongs to the VapB family. Probably forms a complex with cognate toxin VapC2.

In terms of biological role, antitoxin component of a type II toxin-antitoxin (TA) system. Neutralizes the effect of cognate toxin VapC2 but not non-cognate toxin VapC2. This Haemophilus influenzae (strain 86-028NP) protein is Antitoxin VapB2.